Reading from the N-terminus, the 410-residue chain is Mannosyl phosphorylinositol ceramide synthase regulatory protein CSG2 (410 aa).

The signal sequence occupies residues 1–17 (MSTTLLWFSSVIGYVIQ). Residues 18 to 50 (TKCLSNIQSKKEISVGPNGTIATPETNGDNGNS) lie on the Lumenal side of the membrane. N-linked (GlcNAc...) asparagine glycans are attached at residues N35 and N49. The chain crosses the membrane as a helical span at residues 51–71 (SSLTFYLTFMYFASWLLLVPA). Residues 72–141 (SRLWEKMRPM…SVATFKYVAK (70 aa)) are Cytoplasmic-facing. The helical transmembrane segment at 142–161 (LTVLALIMIVADLTYNMALS) threads the bilayer. The Lumenal portion of the chain corresponds to 162 to 167 (LSPAFD). The chain crosses the membrane as a helical span at residues 168 to 187 (VALMQNTAIFEIVTLLYGVC). Residues 188–197 (GISRKNYVFR) lie on the Cytoplasmic side of the membrane. A helical membrane pass occupies residues 198–217 (NFLIMMNAVIGILIISYTKA). The Lumenal portion of the chain corresponds to 218-245 (TCDMLAGKLSVNPNTGELSDPFLFDRLK). The chain crosses the membrane as a helical span at residues 246–265 (GALICGLGALIMGPFAVLWN). The Cytoplasmic segment spans residues 266 to 285 (RWFCSNISKNENSAVVLVKQ). A helical membrane pass occupies residues 286-305 (STHMALIGIIGMVILLPFIP). At 306-324 (KFPSRESVESISLFYNDKS) the chain is on the lumenal side. The helical transmembrane segment at 325-344 (FWFSLLGSIIFGSLPSLISI) threads the bilayer. The Cytoplasmic portion of the chain corresponds to 345–355 (LELNRKAPAEY). Residues 356–374 (LTTCNLGAIIFMGLAEWVC) traverse the membrane as a helical segment. Topologically, residues 375–385 (EPTQTTIVRWE) are lumenal. The helical transmembrane segment at 386–404 (VIGYIMLTVSLLVLSVTLG) threads the bilayer. The Cytoplasmic segment spans residues 405–410 (EGKYHH).

As to quaternary structure, heterodimer of CSH1 and CSG2, and SUR1 and CSG2.

The protein localises to the endoplasmic reticulum membrane. Functionally, required for calcium regulation. May regulate calcium accumulation by a non-vacuole organelle. Also regulates the activity of CSH1 and SUR1 during mannosyl phosphorylinositol ceramide synthesis. The chain is Mannosyl phosphorylinositol ceramide synthase regulatory protein CSG2 (CSG2) from Saccharomyces cerevisiae (strain ATCC 204508 / S288c) (Baker's yeast).